The chain runs to 351 residues: UDP-3-O-acylglucosamine N-acyltransferase (351 aa).

The active-site Proton acceptor is the His-257.

The protein belongs to the transferase hexapeptide repeat family. LpxD subfamily. In terms of assembly, homotrimer.

The enzyme catalyses a UDP-3-O-[(3R)-3-hydroxyacyl]-alpha-D-glucosamine + a (3R)-hydroxyacyl-[ACP] = a UDP-2-N,3-O-bis[(3R)-3-hydroxyacyl]-alpha-D-glucosamine + holo-[ACP] + H(+). Its pathway is bacterial outer membrane biogenesis; LPS lipid A biosynthesis. Its function is as follows. Catalyzes the N-acylation of UDP-3-O-acylglucosamine using 3-hydroxyacyl-ACP as the acyl donor. Is involved in the biosynthesis of lipid A, a phosphorylated glycolipid that anchors the lipopolysaccharide to the outer membrane of the cell. This is UDP-3-O-acylglucosamine N-acyltransferase from Methylorubrum populi (strain ATCC BAA-705 / NCIMB 13946 / BJ001) (Methylobacterium populi).